Consider the following 176-residue polypeptide: MTLFFASMAYASGDSGHGPDWGNFAFRVVNFVIFAGIIWKAAGKKIVGFFTGRRQGIEQELNDLETRKTEAKKQLAEVERRIANLESERQAILADYRAQGENIKAAIIDKAEKSASLITEQAKRTADNEIKAAIDAMRAQMADEIIVAAEKLLAEKLTANEHEKLIDKYLTKVVLN.

A helical transmembrane segment spans residues 24 to 43 (FAFRVVNFVIFAGIIWKAAG).

This sequence belongs to the ATPase B chain family. As to quaternary structure, F-type ATPases have 2 components, F(1) - the catalytic core - and F(0) - the membrane proton channel. F(1) has five subunits: alpha(3), beta(3), gamma(1), delta(1), epsilon(1). F(0) has three main subunits: a(1), b(2) and c(10-14). The alpha and beta chains form an alternating ring which encloses part of the gamma chain. F(1) is attached to F(0) by a central stalk formed by the gamma and epsilon chains, while a peripheral stalk is formed by the delta and b chains.

Its subcellular location is the cell inner membrane. F(1)F(0) ATP synthase produces ATP from ADP in the presence of a proton or sodium gradient. F-type ATPases consist of two structural domains, F(1) containing the extramembraneous catalytic core and F(0) containing the membrane proton channel, linked together by a central stalk and a peripheral stalk. During catalysis, ATP synthesis in the catalytic domain of F(1) is coupled via a rotary mechanism of the central stalk subunits to proton translocation. In terms of biological role, component of the F(0) channel, it forms part of the peripheral stalk, linking F(1) to F(0). This chain is ATP synthase subunit b, found in Nitratidesulfovibrio vulgaris (strain ATCC 29579 / DSM 644 / CCUG 34227 / NCIMB 8303 / VKM B-1760 / Hildenborough) (Desulfovibrio vulgaris).